Here is a 180-residue protein sequence, read N- to C-terminus: Pro-glucagon (180 aa).

Residues 1 to 20 (MKSIYFVAGLFVMLVQGSWQ) form the signal peptide. Residues 23–56 (LQDTEEKPRSFSTSQTDLLDDPDQMNEDKRHSQG) are disordered. Ser-54 carries the post-translational modification Phosphoserine. Residues 84 to 89 (NRNEIA) constitute a propeptide that is removed on maturation. Phosphoserine occurs at positions 105 and 108. Arg-127 is subject to Arginine amide. A propeptide spanning residues 131–145 (DFPEEVTIVEELRRR) is cleaved from the precursor. Ser-150 and Ser-152 each carry phosphoserine.

Belongs to the glucagon family. In terms of processing, proglucagon is post-translationally processed in a tissue-specific manner in pancreatic A cells and intestinal L cells. In pancreatic A cells, the major bioactive hormone is glucagon cleaved by PCSK2/PC2. In the intestinal L cells PCSK1/PC1 liberates GLP-1, GLP-2, glicentin and oxyntomodulin. GLP-1 is further N-terminally truncated by post-translational processing in the intestinal L cells resulting in GLP-1(7-37) GLP-1-(7-36)amide. The C-terminal amidation is neither important for the metabolism of GLP-1 nor for its effects on the endocrine pancreas. In terms of tissue distribution, glucagon is secreted in the A cells of the islets of Langerhans. GLP-1, GLP-2, oxyntomodulin and glicentin are secreted from enteroendocrine cells throughout the gastrointestinal tract. GLP-1 and GLP-2 are also secreted in selected neurons in the brain.

The protein localises to the secreted. Its function is as follows. Plays a key role in glucose metabolism and homeostasis. Regulates blood glucose by increasing gluconeogenesis and decreasing glycolysis. A counterregulatory hormone of insulin, raises plasma glucose levels in response to insulin-induced hypoglycemia. Plays an important role in initiating and maintaining hyperglycemic conditions in diabetes. In terms of biological role, potent stimulator of glucose-dependent insulin release. Also stimulates insulin release in response to IL6. Plays important roles on gastric motility and the suppression of plasma glucagon levels. May be involved in the suppression of satiety and stimulation of glucose disposal in peripheral tissues, independent of the actions of insulin. Has growth-promoting activities on intestinal epithelium. May also regulate the hypothalamic pituitary axis (HPA) via effects on LH, TSH, CRH, oxytocin, and vasopressin secretion. Increases islet mass through stimulation of islet neogenesis and pancreatic beta cell proliferation. Inhibits beta cell apoptosis. Stimulates intestinal growth and up-regulates villus height in the small intestine, concomitant with increased crypt cell proliferation and decreased enterocyte apoptosis. The gastrointestinal tract, from the stomach to the colon is the principal target for GLP-2 action. Plays a key role in nutrient homeostasis, enhancing nutrient assimilation through enhanced gastrointestinal function, as well as increasing nutrient disposal. Stimulates intestinal glucose transport and decreases mucosal permeability. Functionally, significantly reduces food intake. Inhibits gastric emptying in humans. Suppression of gastric emptying may lead to increased gastric distension, which may contribute to satiety by causing a sensation of fullness. Its function is as follows. May modulate gastric acid secretion and the gastro-pyloro-duodenal activity. May play an important role in intestinal mucosal growth in the early period of life. In Octodon degus (Degu), this protein is Pro-glucagon (GCG).